The following is a 45-amino-acid chain: Globin, minor monomeric component (45 aa).

Residues 1 to 45 enclose the Globin domain; it reads GLSAAERQVVASCWKDIAGADXGAGVGKEXLIKFISAAPEMAAVF.

This sequence belongs to the globin family. In terms of assembly, monomer.

The polypeptide is Globin, minor monomeric component (Glycera dibranchiata (Bloodworm)).